A 309-amino-acid polypeptide reads, in one-letter code: Short-chain dehydrogenase/reductase ARMGADRAFT_1048226 (309 aa).

Residues K64, D86, N113, and K145 each coordinate NADP(+). S167 acts as the Proton donor in catalysis. Residues Y196 and K200 each contribute to the NADP(+) site. Catalysis depends on Y196, which acts as the Proton acceptor. The active-site Lowers pKa of active site Tyr is the K200.

The protein belongs to the short-chain dehydrogenases/reductases (SDR) family.

The protein operates within secondary metabolite biosynthesis. Short-chain dehydrogenase/reductase, part of the gene cluster that mediates the biosynthesis of melleolides, a range of antifungal and phytotoxic polyketide derivatives composed of an orsellinic acid (OA) moiety esterified to various sesquiterpene alcohols. The first step in melleolides biosynthesis is performed by the delta(6)-protoilludene synthase PRO1 which catalyzes the cyclization of farnesyl diphosphate to protoilludene. The orsellinic acid synthase armB produces OA by condensing acetyl-CoA with 3 malonyl-CoA units in a three-round chain elongation reaction folowed by a C2-C7 ring closure. ArmB further catalyzes the trans-esterification of OA to the various sesquiterpene alcohols resulting from the hydroxylation of protoilludene. The melleolides cluster also includes 5 cytochrome P450 monooxygenases, 4 NAD(+)-dependent oxidoreductases, one flavin-dependent oxidoreductase, and one O-methyltransferase. The cytochrome P450 monooxygenases may be involved in protoilludene hydroxylation to elaborate melleolides with multiple alcohol groups, such as melleolide D, which carries alcohol functionalities at C-4, C-5, C-10, and C-13. The role of the NAD(+)-dependent enzymes remains unknown. Numerous melleolides, including arnamial, show 5'-O-methylation of the aromatic moiety which may be catalyzed by the methyltransferase encoded in the cluster. The flavin-dependent oxidoreductase might represent the dehydrogenase yielding the aldehyde in position 1 of arnamial and other melleolides. Finally, several halogenase localized outside of the cluster, are able to catalyze the transfer of a single chlorine atom to the melleolide backbone, resulting in a 6'-chloromelleolide product. The chain is Short-chain dehydrogenase/reductase ARMGADRAFT_1048226 from Armillaria gallica (Bulbous honey fungus).